We begin with the raw amino-acid sequence, 126 residues long: Aspartate 1-decarboxylase (126 aa).

S25 serves as the catalytic Schiff-base intermediate with substrate; via pyruvic acid. S25 bears the Pyruvic acid (Ser) mark. Position 57 (T57) interacts with substrate. The Proton donor role is filled by Y58. 73 to 75 is a substrate binding site; the sequence is GAA.

It belongs to the PanD family. Heterooctamer of four alpha and four beta subunits. Pyruvate serves as cofactor. In terms of processing, is synthesized initially as an inactive proenzyme, which is activated by self-cleavage at a specific serine bond to produce a beta-subunit with a hydroxyl group at its C-terminus and an alpha-subunit with a pyruvoyl group at its N-terminus.

The protein localises to the cytoplasm. The enzyme catalyses L-aspartate + H(+) = beta-alanine + CO2. Its pathway is cofactor biosynthesis; (R)-pantothenate biosynthesis; beta-alanine from L-aspartate: step 1/1. Catalyzes the pyruvoyl-dependent decarboxylation of aspartate to produce beta-alanine. This Alcanivorax borkumensis (strain ATCC 700651 / DSM 11573 / NCIMB 13689 / SK2) protein is Aspartate 1-decarboxylase.